Reading from the N-terminus, the 278-residue chain is Small ribosomal subunit protein uS5 (278 aa).

The segment at 1 to 43 is disordered; that stretch reads MADAPAPAGGRGGFRGGFGGRGRGRGRGRGRGRGRGRGAKDGD. Gly residues predominate over residues 9 to 21; sequence GGRGGFRGGFGGR. The segment covering 22–37 has biased composition (basic residues); it reads GRGRGRGRGRGRGRGR. Residues 88–151 enclose the S5 DRBM domain; it reads LKDEVLKIMP…ILAKLSVVPV (64 aa).

It belongs to the universal ribosomal protein uS5 family.

In terms of biological role, component of the ribosome, a large ribonucleoprotein complex responsible for the synthesis of proteins in the cell. The small ribosomal subunit (SSU) binds messenger RNAs (mRNAs) and translates the encoded message by selecting cognate aminoacyl-transfer RNA (tRNA) molecules. The large subunit (LSU) contains the ribosomal catalytic site termed the peptidyl transferase center (PTC), which catalyzes the formation of peptide bonds, thereby polymerizing the amino acids delivered by tRNAs into a polypeptide chain. The nascent polypeptides leave the ribosome through a tunnel in the LSU and interact with protein factors that function in enzymatic processing, targeting, and the membrane insertion of nascent chains at the exit of the ribosomal tunnel. Plays a role in the assembly and function of the 40S ribosomal subunit. Mutations in this protein affects the control of translational fidelity. Involved in nucleolar processing of pre-18S ribosomal RNA and ribosome assembly. The polypeptide is Small ribosomal subunit protein uS5 (RPS2) (Urechis caupo (Innkeeper worm)).